The sequence spans 401 residues: Phosphonopyruvate decarboxylase (401 aa).

A disordered region spans residues 382–401 (WPASAVGSGTRAAAGSAGDR). The span at 384–401 (ASAVGSGTRAAAGSAGDR) shows a compositional bias: low complexity.

Belongs to the TPP enzyme family. Thiamine diphosphate is required as a cofactor. Mg(2+) serves as cofactor.

The catalysed reaction is 3-phosphonopyruvate + H(+) = phosphonoacetaldehyde + CO2. Its pathway is secondary metabolite biosynthesis; bialaphos biosynthesis. In terms of biological role, involved in the biosynthesis of phosphinothricin tripeptide (PTT), also known as bialaphos (BA), a natural-product antibiotic and potent herbicide. Catalyzes the decarboxylation of phosphonopyruvate (PnPy) to generate phosphonoacetaldehyde (PnAA). This chain is Phosphonopyruvate decarboxylase, found in Streptomyces hygroscopicus.